Here is a 572-residue protein sequence, read N- to C-terminus: Phosphoglucomutase-2 (572 aa).

Residues Thr-23, Arg-27, 126–127, and Lys-140 contribute to the substrate site; that span reads SH. Ser-126 (phosphoserine intermediate) is an active-site residue. Ser-126 provides a ligand contact to Mg(2+). Asp-308, Asp-310, and Asp-312 together coordinate Mg(2+). Substrate-binding positions include 312-313, Thr-373, 392-394, Lys-405, and Arg-527; these read DR and EES.

This sequence belongs to the phosphohexose mutase family. Requires Mg(2+) as cofactor. Phosphorylated via a calcium-dependent protein kinase.

Its subcellular location is the cytoplasm. It carries out the reaction alpha-D-glucose 1-phosphate = alpha-D-glucose 6-phosphate. Functionally, may be involved in membrane fusion in exocytosis. This chain is Phosphoglucomutase-2 (pp63-2), found in Paramecium tetraurelia.